A 287-amino-acid chain; its full sequence is Bifunctional protein FolD (287 aa).

Residues 164–166, Ser189, and Ile230 contribute to the NADP(+) site; that span reads GSS.

This sequence belongs to the tetrahydrofolate dehydrogenase/cyclohydrolase family. As to quaternary structure, homodimer.

The catalysed reaction is (6R)-5,10-methylene-5,6,7,8-tetrahydrofolate + NADP(+) = (6R)-5,10-methenyltetrahydrofolate + NADPH. It catalyses the reaction (6R)-5,10-methenyltetrahydrofolate + H2O = (6R)-10-formyltetrahydrofolate + H(+). The protein operates within one-carbon metabolism; tetrahydrofolate interconversion. In terms of biological role, catalyzes the oxidation of 5,10-methylenetetrahydrofolate to 5,10-methenyltetrahydrofolate and then the hydrolysis of 5,10-methenyltetrahydrofolate to 10-formyltetrahydrofolate. The chain is Bifunctional protein FolD from Aliarcobacter butzleri (strain RM4018) (Arcobacter butzleri).